A 696-amino-acid chain; its full sequence is Elongation factor G (696 aa).

One can recognise a tr-type G domain in the interval 8–290 (ERYRNIGIMA…AVLDYLPSPL (283 aa)). GTP is bound by residues 17 to 24 (AHIDAGKT), 88 to 92 (DTPGH), and 142 to 145 (NKMD).

This sequence belongs to the TRAFAC class translation factor GTPase superfamily. Classic translation factor GTPase family. EF-G/EF-2 subfamily.

It localises to the cytoplasm. Its function is as follows. Catalyzes the GTP-dependent ribosomal translocation step during translation elongation. During this step, the ribosome changes from the pre-translocational (PRE) to the post-translocational (POST) state as the newly formed A-site-bound peptidyl-tRNA and P-site-bound deacylated tRNA move to the P and E sites, respectively. Catalyzes the coordinated movement of the two tRNA molecules, the mRNA and conformational changes in the ribosome. The protein is Elongation factor G of Nitrosomonas eutropha (strain DSM 101675 / C91 / Nm57).